A 543-amino-acid chain; its full sequence is MIRAGGPSPSPRGRRAGPIRLPRRAPSSTPTRAKTEEKASADASSRTGADAEVQFEAVIGIETHVQLNCRTKAFCRCAAVYGDEPNTHCCPTCMGYPGTYPVLSEAVVRKAVQLGLGLNARVRRRSKFDRKQYFYPDLPKGYQISQFDEPIAEGGYIDVVIPVEDGGGVRRIGITRAHVEEDAGKLTHYPAKGDTPGYALADYNRAGVALVEIVSEPDMRTGREVAAYGAELRRLVRYLDVGDGNLSEGSMRCDVNVSVRPVGREAFGTKVEVKNMNSFNAMSRAIDFEIDRQTALIRAGKGDEIVQETRTWDEGRQCTVSMRKKEGLADYRYFPEPDLPPLVFDEAFVEKCASAMPELPGAIRARYADLGLPPADVQVLVEDKELVEYFDAALAAGAPAKQCANWLTGDVMAWLKNAKDVAVSSMPLSATQLAEFCTLIEDGVISGKIGKDILPDLLEGKEGNKSVGDIVEERGLKQISDPKEIEAIVDRVLEANPGQLEQYRGGKDKLKGFFVGAVLRESGGRANPALSNEILMRKLNEGR.

Positions 1–47 (MIRAGGPSPSPRGRRAGPIRLPRRAPSSTPTRAKTEEKASADASSRT) are disordered. A compositionally biased stretch (basic residues) spans 12 to 23 (RGRRAGPIRLPR).

It belongs to the GatB/GatE family. GatB subfamily. In terms of assembly, subunit of the heterotrimeric GatCAB amidotransferase (AdT) complex, composed of A, B and C subunits.

Its subcellular location is the mitochondrion. It is found in the plastid. The protein resides in the chloroplast. It carries out the reaction L-glutamyl-tRNA(Gln) + L-glutamine + ATP + H2O = L-glutaminyl-tRNA(Gln) + L-glutamate + ADP + phosphate + H(+). Its function is as follows. Allows the formation of correctly charged Gln-tRNA(Gln) through the transamidation of misacylated Glu-tRNA(Gln) in chloroplasts and mitochondria. The reaction takes place in the presence of glutamine and ATP through an activated gamma-phospho-Glu-tRNA(Gln). The sequence is that of Glutamyl-tRNA(Gln) amidotransferase subunit B-1, chloroplastic/mitochondrial from Micromonas commoda (strain RCC299 / NOUM17 / CCMP2709) (Picoplanktonic green alga).